A 91-amino-acid chain; its full sequence is Kazal-type trypsin inhibitor (91 aa).

A signal peptide spans 1 to 22 (MRHIGVFVGVLALALVLLVVEA). One can recognise a Kazal-like domain in the interval 25 to 78 (DAERGVCACPRIYMPVCGSNLKTYNNDCLLRCEINSDLGRANNLRKIADQACDN). Cystine bridges form between C31–C56, C33–C52, and C41–C76. N78 carries N-linked (GlcNAc...) asparagine glycosylation.

Interacts with human PLG (plasmin). As to expression, female salivary gland. Female gut at 3 and 24 hours after blood feeding. Female carcass. Male tissues. Not detected in ovary and fat body at 3 and 24 hours after blood feeding.

The protein resides in the secreted. In terms of biological role, anticoagulant protein that decreases host thrombin (F2) activity via an uncompetitive inhibition mechanism. Inhibits amidolytic activity of host plasmin (PLG). Inhibits amidolytic activity of host trypsin. Inhibits trypsin-like endogenous activity from gut of female mosquitoes 24 hours after feeding and weakly affects enzyme activity from gut 3 hours after feeding, suggesting a possible role as an inhibitor of endogenous proteases. Its function is as follows. (Microbial infection) Limits host plasmin-mediated enhancement of dengue virus type 2 infection in mosquito midgut. The sequence is that of Kazal-type trypsin inhibitor from Aedes aegypti (Yellowfever mosquito).